Consider the following 51-residue polypeptide: Large ribosomal subunit protein bL33 (51 aa).

It belongs to the bacterial ribosomal protein bL33 family.

This is Large ribosomal subunit protein bL33 from Acidithiobacillus ferrooxidans (strain ATCC 53993 / BNL-5-31) (Leptospirillum ferrooxidans (ATCC 53993)).